A 552-amino-acid polypeptide reads, in one-letter code: CTP synthase (552 aa).

The segment at 1–270 (MTKYVFVTGG…DRIICEELKL (270 aa)) is amidoligase domain. Serine 13 contributes to the CTP binding site. Serine 13 is a binding site for UTP. ATP contacts are provided by residues 14 to 19 (SLGKGI) and aspartate 71. Mg(2+) is bound by residues aspartate 71 and glutamate 144. Residues 151–153 (DIE), 191–196 (KTKPTQ), and lysine 227 contribute to the CTP site. UTP-binding positions include 191–196 (KTKPTQ) and lysine 227. The region spanning 295–547 (TIGMVGKYVD…VEAALANKQA (253 aa)) is the Glutamine amidotransferase type-1 domain. Position 356 (glycine 356) interacts with L-glutamine. Residue cysteine 383 is the Nucleophile; for glutamine hydrolysis of the active site. L-glutamine contacts are provided by residues 384–387 (LGMQ), glutamate 407, and arginine 473. Active-site residues include histidine 520 and glutamate 522.

It belongs to the CTP synthase family. As to quaternary structure, homotetramer.

The enzyme catalyses UTP + L-glutamine + ATP + H2O = CTP + L-glutamate + ADP + phosphate + 2 H(+). The catalysed reaction is L-glutamine + H2O = L-glutamate + NH4(+). It catalyses the reaction UTP + NH4(+) + ATP = CTP + ADP + phosphate + 2 H(+). The protein operates within pyrimidine metabolism; CTP biosynthesis via de novo pathway; CTP from UDP: step 2/2. Its activity is regulated as follows. Allosterically activated by GTP, when glutamine is the substrate; GTP has no effect on the reaction when ammonia is the substrate. The allosteric effector GTP functions by stabilizing the protein conformation that binds the tetrahedral intermediate(s) formed during glutamine hydrolysis. Inhibited by the product CTP, via allosteric rather than competitive inhibition. In terms of biological role, catalyzes the ATP-dependent amination of UTP to CTP with either L-glutamine or ammonia as the source of nitrogen. Regulates intracellular CTP levels through interactions with the four ribonucleotide triphosphates. This is CTP synthase from Burkholderia ambifaria (strain MC40-6).